The sequence spans 195 residues: Glycerol-3-phosphate acyltransferase 2 (195 aa).

The next 6 membrane-spanning stretches (helical) occupy residues 4 to 24, 52 to 72, 73 to 93, 115 to 135, 150 to 170, and 171 to 191; these read VVSL…VAGV, GAAA…VGLA, LWLA…GVVF, AMLV…LALI, AIPF…SRLG, and GGAE…HLLA.

This sequence belongs to the PlsY family. Probably interacts with PlsX.

The protein localises to the cell membrane. The catalysed reaction is an acyl phosphate + sn-glycerol 3-phosphate = a 1-acyl-sn-glycero-3-phosphate + phosphate. It functions in the pathway lipid metabolism; phospholipid metabolism. Functionally, catalyzes the transfer of an acyl group from acyl-phosphate (acyl-PO(4)) to glycerol-3-phosphate (G3P) to form lysophosphatidic acid (LPA). This enzyme utilizes acyl-phosphate as fatty acyl donor, but not acyl-CoA or acyl-ACP. The polypeptide is Glycerol-3-phosphate acyltransferase 2 (Deinococcus radiodurans (strain ATCC 13939 / DSM 20539 / JCM 16871 / CCUG 27074 / LMG 4051 / NBRC 15346 / NCIMB 9279 / VKM B-1422 / R1)).